The primary structure comprises 449 residues: MATTAQYLPRGPGGGAGGTGPLMHPDAAAAAAAAAERLHAGAAYREVQKLMHHEWLGAGAGHPVGLAHPQWLPTGGGGGGDWAGGPHLEHGKAGGGGTGRADDGGGGGGFHARLVHQGAAHAGAAWAQGGTAHHLGPAMSPSPGAGGGHQPQPLGLYAQAAYPGGGGGGLAGMLAAGGGGAGPGLHHALHEDGHEAQLEPSPPPHLGAHGHAHGHAHAGGLHAAAAHLHPGAGGGGSSVGEHSDEDAPSSDDLEQFAKQFKQRRIKLGFTQADVGLALGTLYGNVFSQTTICRFEALQLSFKNMCKLKPLLNKWLEETDSSSGSPTNLDKIAAQGRKRKKRTSIEVGVKGALESHFLKCPKPSAHEITGLADSLQLEKEVVRVWFCNRRQKEKRMTPAAGAGHPPMDDVYAPGELGPGGGSASPPSAPPPPPPAALHHHHHHTLPGSVQ.

Disordered regions lie at residues 1–22 (MATTAQYLPRGPGGGAGGTGPL), 76–108 (GGGGGDWAGGPHLEHGKAGGGGTGRADDGGGGG), 132–152 (AHHLGPAMSPSPGAGGGHQPQ), 184–251 (GLHH…PSSD), and 393–449 (KRMT…GSVQ). Composition is skewed to gly residues over residues 11–20 (GPGGGAGGTG) and 93–108 (AGGGGTGRADDGGGGG). Positions 132 to 143 (AHHLGPAMSPSP) are enriched in low complexity. Residues 188–197 (ALHEDGHEAQ) show a composition bias toward basic and acidic residues. Over residues 218 to 230 (AGGLHAAAAHLHP) the composition is skewed to low complexity. Positions 245–319 (EDAPSSDDLE…LLNKWLEETD (75 aa)) constitute a POU-specific domain. A DNA-binding region (homeobox) is located at residues 337–396 (KRKKRTSIEVGVKGALESHFLKCPKPSAHEITGLADSLQLEKEVVRVWFCNRRQKEKRMT). Positions 425–434 (PSAPPPPPPA) are enriched in pro residues.

This sequence belongs to the POU transcription factor family. Class-3 subfamily.

The protein resides in the nucleus. In terms of biological role, transcription factor that binds to the octamer motif (5'-ATTTGCAT-3'). Acts as a transcriptional activator when binding cooperatively with SOX4, SOX11, or SOX12 to gene promoters. Acts as a transcriptional repressor of myelin-specific genes. This chain is POU domain, class 3, transcription factor 1 (Pou3f1), found in Mus musculus (Mouse).